Consider the following 636-residue polypeptide: Sodium-dependent proline transporter (636 aa).

Over 1-45 (MKKLQGAHLRKPVTPDLLMTPSDQGDVDLDVDFAAHRGNWTGKLD) the chain is Cytoplasmic. Position 20 is a phosphothreonine (Thr-20). Phosphoserine is present on Ser-22. Helical transmembrane passes span 46 to 66 (FLLS…FPYR), 74 to 93 (AFLV…LFFL), and 117 to 137 (GAGA…NMII). Residues 138–214 (AYVLFYLFAS…QGIGSPGEIR (77 aa)) are Extracellular-facing. Asn-182 carries an N-linked (GlcNAc...) asparagine glycan. 9 consecutive transmembrane segments (helical) span residues 215–233 (WNLC…LCIL), 242–259 (VVYF…MLLV), 295–312 (IFYS…FASY), 324–345 (FIVT…FSVL), 378–397 (LPLS…TLGL), 425–443 (VFSG…ILTT), 459–479 (SFGL…VYGI), 500–519 (ACWL…YSIV), and 538–556 (LGIL…GMLV). Residues 557–636 (AVLREEGSLW…EIAEEEESMM (80 aa)) lie on the Cytoplasmic side of the membrane. Phosphoserine occurs at positions 573 and 582. Thr-588 is modified (phosphothreonine). Tyr-591 is subject to Phosphotyrosine. Ser-598 and Ser-600 each carry phosphoserine.

Belongs to the sodium:neurotransmitter symporter (SNF) (TC 2.A.22) family. SLC6A7 subfamily. As to expression, brain specific (at protein level). Highly expressed in hippocampus, corpus striatum and temporal cortex. Also expressed in frontal cortex, occipital cortex and, at lower levels, in cerebellum and parietal cortex (at protein level).

The protein resides in the synaptic cell membrane. The enzyme catalyses L-proline(out) + chloride(out) + 2 Na(+)(out) = L-proline(in) + chloride(in) + 2 Na(+)(in). It catalyses the reaction L-pipecolate(out) + chloride(out) + 2 Na(+)(out) = L-pipecolate(in) + chloride(in) + 2 Na(+)(in). Its function is as follows. Brain specific sodium (and chloride)-dependent proline transporter. Terminates the action of proline by its high affinity sodium-dependent reuptake into presynaptic terminals. This Homo sapiens (Human) protein is Sodium-dependent proline transporter.